The sequence spans 197 residues: Signal peptidase complex catalytic subunit SEC11 (197 aa).

Over 1-14 (MLSSLAPYMANPRQ) the chain is Cytoplasmic. A helical; Signal-anchor for type II membrane protein membrane pass occupies residues 15–33 (TLTQVLNFALVLSTAFMLW). Residues 34-197 (KGLSVVTNST…MGLMVVLQRE (164 aa)) are Lumenal-facing. A glycan (N-linked (GlcNAc...) asparagine) is linked at N41. Residues S53 and H92 each act as charge relay system in the active site. The span at 102–115 (PGREDKKSVKKGGE) shows a compositional bias: basic and acidic residues. The segment at 102–134 (PGREDKKSVKKGGEEGEETSSTPSQKLLTKGDN) is disordered. D139 serves as the catalytic Charge relay system. The tract at residues 183–194 (VLLGFMGLMVVL) is C-terminal short (CTS) helix.

The protein belongs to the peptidase S26B family. As to quaternary structure, component of the signal peptidase complex (SPC) composed of a catalytic subunit SEC11 and three accessory subunits SPC1, SPC2 and SPC3. The complex induces a local thinning of the ER membrane which is used to measure the length of the signal peptide (SP) h-region of protein substrates. This ensures the selectivity of the complex towards h-regions shorter than 18-20 amino acids. SPC associates with the translocon complex.

It is found in the endoplasmic reticulum membrane. The catalysed reaction is Cleavage of hydrophobic, N-terminal signal or leader sequences from secreted and periplasmic proteins.. In terms of biological role, catalytic component of the signal peptidase complex (SPC) which catalyzes the cleavage of N-terminal signal sequences from nascent proteins as they are translocated into the lumen of the endoplasmic reticulum. Specifically cleaves N-terminal signal peptides that contain a hydrophobic alpha-helix (h-region) shorter than 18-20 amino acids. This is Signal peptidase complex catalytic subunit SEC11 (SEC11) from Paracoccidioides lutzii (strain ATCC MYA-826 / Pb01) (Paracoccidioides brasiliensis).